The following is a 413-amino-acid chain: Multifunctional CCA protein (413 aa).

ATP is bound by residues glycine 8 and arginine 11. The CTP site is built by glycine 8 and arginine 11. Aspartate 21 and aspartate 23 together coordinate Mg(2+). Positions 91, 141, and 144 each coordinate ATP. Residues arginine 91, arginine 141, and arginine 144 each coordinate CTP. Positions 230 to 331 (TGAHLLLVLD…VRLLERCDAL (102 aa)) constitute an HD domain.

Belongs to the tRNA nucleotidyltransferase/poly(A) polymerase family. Bacterial CCA-adding enzyme type 1 subfamily. Monomer. Can also form homodimers and oligomers. Mg(2+) is required as a cofactor. Ni(2+) serves as cofactor.

The enzyme catalyses a tRNA precursor + 2 CTP + ATP = a tRNA with a 3' CCA end + 3 diphosphate. It carries out the reaction a tRNA with a 3' CCA end + 2 CTP + ATP = a tRNA with a 3' CCACCA end + 3 diphosphate. Its function is as follows. Catalyzes the addition and repair of the essential 3'-terminal CCA sequence in tRNAs without using a nucleic acid template. Adds these three nucleotides in the order of C, C, and A to the tRNA nucleotide-73, using CTP and ATP as substrates and producing inorganic pyrophosphate. tRNA 3'-terminal CCA addition is required both for tRNA processing and repair. Also involved in tRNA surveillance by mediating tandem CCA addition to generate a CCACCA at the 3' terminus of unstable tRNAs. While stable tRNAs receive only 3'-terminal CCA, unstable tRNAs are marked with CCACCA and rapidly degraded. The sequence is that of Multifunctional CCA protein from Verminephrobacter eiseniae (strain EF01-2).